The sequence spans 229 residues: Large ribosomal subunit protein uL1 (229 aa).

This sequence belongs to the universal ribosomal protein uL1 family. In terms of assembly, part of the 50S ribosomal subunit.

In terms of biological role, binds directly to 23S rRNA. The L1 stalk is quite mobile in the ribosome, and is involved in E site tRNA release. Its function is as follows. Protein L1 is also a translational repressor protein, it controls the translation of the L11 operon by binding to its mRNA. The protein is Large ribosomal subunit protein uL1 of Chlorobium phaeobacteroides (strain DSM 266 / SMG 266 / 2430).